The chain runs to 280 residues: MATEYASSGEYIKHHLQNLTYGQHADGTWGFAHGAEEAKAMGFWAINVDSMLFSIGLGVLFLFLFRLAAKKATVGVPTGLQNFVEWVIEFIDTSVRGSFSHQNALVAPLALTVFMWVFLMNLMDLLPVDWLPYVATMAGIPYLKVVPSTDPNVTFGLSLSIFFLVLYYSVKMKGAGGFFSELAFQPFPKFLFPVNLLLEGVGLIAKPISLALRLFGNMYAGEMIFILIALMFGGGWVLALFGGALQWAWAVFHILIITLQAFIFMTLTIVYLDMAHAEHH.

Helical transmembrane passes span 45–65 (AINV…LFLF), 105–125 (LVAP…LMDL), 126–146 (LPVD…LKVV), 159–179 (LSIF…GGFF), 190–210 (FLFP…PISL), 223–243 (MIFI…LFGG), and 250–270 (AVFH…LTIV).

The protein belongs to the ATPase A chain family. As to quaternary structure, F-type ATPases have 2 components, CF(1) - the catalytic core - and CF(0) - the membrane proton channel. CF(1) has five subunits: alpha(3), beta(3), gamma(1), delta(1), epsilon(1). CF(0) has three main subunits: a(1), b(2) and c(9-12). The alpha and beta chains form an alternating ring which encloses part of the gamma chain. CF(1) is attached to CF(0) by a central stalk formed by the gamma and epsilon chains, while a peripheral stalk is formed by the delta and b chains.

Its subcellular location is the cell inner membrane. Key component of the proton channel; it plays a direct role in the translocation of protons across the membrane. The chain is ATP synthase subunit a from Thiobacillus denitrificans (strain ATCC 25259 / T1).